The primary structure comprises 328 residues: Putative tyrosine-protein kinase C03B1.5 (328 aa).

The Protein kinase domain occupies 25-288 (WSPALKIGSG…ALHASSQTYL (264 aa)). ATP is bound by residues 31–39 (IGSGAFGEV) and K62. The Proton acceptor role is filled by D155.

This sequence belongs to the protein kinase superfamily. Tyr protein kinase family.

It carries out the reaction L-tyrosyl-[protein] + ATP = O-phospho-L-tyrosyl-[protein] + ADP + H(+). The chain is Putative tyrosine-protein kinase C03B1.5 from Caenorhabditis elegans.